Here is a 206-residue protein sequence, read N- to C-terminus: uncharacterized protein (206 aa).

Positions 1–18 are cleaved as a signal peptide; it reads MSSLVLIPCALLTQGIYA.

This is an uncharacterized protein from Acanthamoeba polyphaga mimivirus (APMV).